Here is a 694-residue protein sequence, read N- to C-terminus: Methionine--tRNA ligase (694 aa).

The short motif at 12–22 is the 'HIGH' region element; that stretch reads PYANGPLHLGH. C143, C146, C156, and C159 together coordinate Zn(2+). A 'KMSKS' region motif is present at residues 330–334; the sequence is KMSKS. K333 is an ATP binding site. Low complexity predominate over residues 550-573; that stretch reads MAAPAAPATTTKPAPSKADAKPAA. The disordered stretch occupies residues 550–582; that stretch reads MAAPAAPATTTKPAPSKADAKPAAVANPESQTT. In terms of domain architecture, tRNA-binding spans 591-694; it reads DFAKLDLRIG…SGAQPGMPVR (104 aa).

This sequence belongs to the class-I aminoacyl-tRNA synthetase family. MetG type 1 subfamily. In terms of assembly, homodimer. Zn(2+) serves as cofactor.

It is found in the cytoplasm. The enzyme catalyses tRNA(Met) + L-methionine + ATP = L-methionyl-tRNA(Met) + AMP + diphosphate. Is required not only for elongation of protein synthesis but also for the initiation of all mRNA translation through initiator tRNA(fMet) aminoacylation. The protein is Methionine--tRNA ligase of Xanthomonas euvesicatoria pv. vesicatoria (strain 85-10) (Xanthomonas campestris pv. vesicatoria).